Here is a 1503-residue protein sequence, read N- to C-terminus: Rho GTPase-activating protein 5 (1503 aa).

4 FF domains span residues 267–325 (QLVV…HIEQ), 366–420 (KLME…HVQH), 427–481 (RIEM…HQRE), and 482–548 (IVEK…HIGF). The residue at position 550 (tyrosine 550) is a 3'-nitrotyrosine. A phosphoserine mark is found at serine 590 and serine 765. One can recognise a pG1 pseudoGTPase domain in the interval 590 to 763 (STNIDKVNLF…LESVKHNLDV (174 aa)). The 166-residue stretch at 779 to 944 (RIVMCAMCGD…FSDVLEKKNM (166 aa)) folds into the pG2 pseudoGTPase domain. Phosphoserine occurs at positions 951 and 968. 3 disordered regions span residues 975 to 1004 (YNNYPDSDDDTEAPPPYSPIGDDVQLLPTP), 1022 to 1050 (HSTPNCHDHERNHKVPPPIKPKPVVPKTN), and 1069 to 1091 (NPRKQTSRVPLAHPEDMDSSDNY). Over residues 1036–1045 (VPPPIKPKPV) the composition is skewed to pro residues. Serine 1115 carries the phosphoserine modification. Disordered regions lie at residues 1129–1157 (NTQGDEENGFSDRTSKGHGERRPSKYKYK) and 1169–1255 (YRRT…TRRN). Over residues 1141-1151 (RTSKGHGERRP) the composition is skewed to basic and acidic residues. A phosphoserine mark is found at serine 1196, serine 1203, and serine 1219. The region spanning 1263-1450 (MPLQDLVTAE…TFIQQCQFFF (188 aa)) is the Rho-GAP domain.

As to quaternary structure, may interact with RASA1/p120GAP. In terms of tissue distribution, expressed in spinal cord, cerebellum, kidney, testis and lung.

The protein resides in the cytoplasm. The protein localises to the cell membrane. Its function is as follows. GTPase-activating protein for Rho family members. In Mus musculus (Mouse), this protein is Rho GTPase-activating protein 5 (Arhgap5).